Consider the following 1078-residue polypeptide: MPPGTKRLRALGAFSAGLPTRLPEIMLVGSQSFSPGGPNGIIRSQSFAGFSGLQERRSRCNSFIENASALKKPQAKLKKMHNLGHKNNNTPKEPQPKRVEEVYRALKNGLDEYLEFHQTELDKLTAQLKDMKRNSRLGVLYDLDKQIKTIERYMRRLEFHISKVDELYEAYCIQRRLQDGASKMKQAFATSPASKAARESLSEINRSYKEYTENMCAIEAELESLLGEFSIKMKGLAGFARLCPGDQYEIFMKYGRQRWKLKGKIEVNGKQSWDGAETVFLPLIVGFISIKVTELKGLATHILVGSVTCETKELFAARPQVVAVDINDLGTIKLNLEITWYPFDVEDTTPSSGPGNKTAALQRRMSMYSQGTPETPTFKDQSFFRWLRLSVLSALRDTFFATLHHNHSVGDLPSLSLNPKALLEFYSNLPDDIFESGKAAEEKRPLSLSFSDLQDGDCVFTSSSATSPSSSHSAHPEITITPAELTHSSLSSQNEGTEDSSSASSRNSLGEDHEPKSHPKSDTVEPGKPGVATRSGTESLFLESSVAEALLQESDEASELKPVELDTFEGNITKQLVKRLTSAEGPVTTDKLFFEGSVGSESEAGRSFLDGSLEDAFNGLFLALDPHKKQYKEFQDLNQEVTHLDDVLKCKPAGSRSRSSSLSLTVESALESFDFLNTSDFDEEEEDGDDVCHVGGGADSVFSDTETEKSGYRSVHPEARGHLSEALTEDTGVGTSVAGSPLPLTTGNESLDITIVKHLQYCTQLIQQIVFSSKTPFVARSLLEKLSRQVLVMQKLAAVSDENLGNITSVVEAIPEFHKKLSLLAFWTKCCSPSGVYHSSAARLIKQLEASFARSINKDYPGLAEPVFRTLVSQILDRAEPLLSSSLSSEVITVFQYYSFFTSHGVSDLETYLGQLTRQVAMVQTLQSLRDEKLLQTMSDLAPSNLPAQQEVLRTLALLLTRDDNEVSEAVTLYLAAASKNEHFREKALLYYCEALTKANLQLQKAACLALKSLEATESIKMLVTLCQSDTEEIRTVASETLLSLGEDGRLAYEQLDKFPRDCVKVGGRHGTEVATAF.

Phosphoserine occurs at positions 46 and 62. An involved in cell filopodia formation region spans residues 80-138 (MHNLGHKNNNTPKEPQPKRVEEVYRALKNGLDEYLEFHQTELDKLTAQLKDMKRNSRLG). Residues 108–137 (NGLDEYLEFHQTELDKLTAQLKDMKRNSRL) adopt a coiled-coil conformation. At Ser-366 the chain carries Phosphoserine. Positions 488–508 (SSLSSQNEGTEDSSSASSRNS) are enriched in polar residues. Positions 488 to 534 (SSLSSQNEGTEDSSSASSRNSLGEDHEPKSHPKSDTVEPGKPGVATR) are disordered. The segment covering 509 to 525 (LGEDHEPKSHPKSDTVE) has biased composition (basic and acidic residues). Residue Ser-582 is modified to Phosphoserine.

The protein belongs to the RIPOR family. As to quaternary structure, homooligomer; homooligomerization is regulated by RHOC and leads to the formation of concatemers through the association of N- and C-termini. Interacts (phosphorylated form) with 14-3-3 proteins; these interactions occur during myogenic cell differentiation and also induces T cell proliferation arrest. Interacts (phosphorylated form) with HDAC6; this interaction occurs during early myogenic differentiation, prevents HDAC6 to deacetylate tubulin and also induces T cell proliferation arrest. Interacts with DYSF; this interaction occurs during early myogenic differentiation. Interacts with MYOF. Interacts (via active GTP- or inactive GDP-bound forms) with RHOA; this interaction is direct, blocks the loading of GTP to RHOA and decreases upon chemokine CCL19 stimulation in primary T lymphocytes. Interacts with RHOC. Interacts (via phosphorylated form) with YWHAB; this interaction occurs in a chemokine-dependent manner and does not compete for binding of RIPOR2 with RHOA nor blocks inhibition of RIPOR2-mediated RHOA activity. Interacts with YWHAE. Interacts with YWHAQ. In terms of processing, phosphorylated. Chemokine-induced phosphorylation in neutrophils occurs in a PKC- and AKT-dependent manner, resulting in RIPOR2 interaction with YWHAB and stabilization. Phosphorylated by PKCA, AKT1 and MAPKAPK1A; in vitro. As to expression, expressed in the cochlea. Expressed in inner hair cells and outer hair cells and Hensen's cells (at protein level). Expressed in the brain, cerebellum, spinal cord, retina, heart, spleen liver, kidney, bladder, muscle and lung. Expressed in the cochlea of the inner ear.

The protein localises to the cytoplasm. The protein resides in the cytoskeleton. It is found in the cell projection. It localises to the filopodium. Its subcellular location is the stereocilium. The protein localises to the stereocilium membrane. The protein resides in the apical cell membrane. Acts as an inhibitor of the small GTPase RHOA and plays several roles in the regulation of myoblast and hair cell differentiation, lymphocyte T proliferation and neutrophil polarization. Plays a role in fetal mononuclear myoblast differentiation by promoting filopodia and myotube formation. Maintains naive T lymphocytes in a quiescent state and prevents chemokine-induced T lymphocyte responses, such as cell adhesion, polarization and migration. Involved also in the regulation of neutrophil polarization, chemotaxis and adhesion. Required for normal development of inner and outer hair cell stereocilia within the cochlea of the inner ear. Plays a role for maintaining the structural organization of the basal domain of stereocilia. Involved in mechanosensory hair cell function. Required for normal hearing. This chain is Rho family-interacting cell polarization regulator 2, found in Mus musculus (Mouse).